Here is a 394-residue protein sequence, read N- to C-terminus: Protein BUR2 (394 aa).

2 disordered regions span residues 1 to 32 (MVLS…GNPQ) and 372 to 394 (MSER…KPRF). The span at 9–32 (IANSQPSGNGKTSLDIKQNEGNPQ) shows a compositional bias: polar residues. Residues 372–381 (MSERSIKRPS) are compositionally biased toward basic and acidic residues.

Belongs to the BUR kinase complex.

Its subcellular location is the nucleus. Component of the BUR kinase complex involved in transcription regulation. This complex phosphorylates the UBC2/RAD6 ubiquitin-conjugating enzyme (E2), leading to monoubiquitination of histone H2B and the silencing of telomeric-associated genes. Also required for histone H3 methylation. Necessary for the recovery from pheromone-induced growth arrest in the cell cycle G1 phase. The kinase activity of the complex requires the presence of BUR2. Overexpression of BUR2 interferes with mitotic chromosome segregation. This Kluyveromyces lactis (strain ATCC 8585 / CBS 2359 / DSM 70799 / NBRC 1267 / NRRL Y-1140 / WM37) (Yeast) protein is Protein BUR2 (BUR2).